Consider the following 352-residue polypeptide: Putative DNA relaxase NicK (352 aa).

The protein belongs to the plasmid replication initiation factor family.

In terms of biological role, probable DNA relaxase involved in the transfer of the integrative and conjugative element ICEBs1. Required for the transfer of ICEBs1. Probably mediates conjugation of ICEBs1 by nicking at oriT on the conjugative element and facilitates the translocation of a single strand of ICEBs1 DNA through a transmembrane conjugation pore into the recipient cell. In Bacillus subtilis (strain 168), this protein is Putative DNA relaxase NicK (nicK).